Consider the following 382-residue polypeptide: Putative acetyl-CoA C-acetyltransferase VraB (382 aa).

Cys86 acts as the Acyl-thioester intermediate in catalysis. The active-site Proton acceptor is the His338.

This sequence belongs to the thiolase-like superfamily. Thiolase family.

The chain is Putative acetyl-CoA C-acetyltransferase VraB (vraB) from Staphylococcus epidermidis (strain ATCC 12228 / FDA PCI 1200).